The following is a 331-amino-acid chain: GTP-binding protein RHO5 (331 aa).

G10–T17 is a binding site for GTP. Positions A51 to T76 are disordered. Residues S66–S75 are compositionally biased toward low complexity. Residues D87–Q91 and T156–D159 each bind GTP. A phosphoserine mark is found at S223 and S228. Phosphothreonine occurs at positions 232 and 244. Residues T239–L331 are disordered. The span at H258–Q273 shows a compositional bias: polar residues. K276 is covalently cross-linked (Glycyl lysine isopeptide (Lys-Gly) (interchain with G-Cter in ubiquitin)). A compositionally biased stretch (basic and acidic residues) spans G287–K297. Positions H308–L331 are enriched in basic residues. Residue C328 is modified to Cysteine methyl ester. C328 carries the S-geranylgeranyl cysteine lipid modification. Residues V329–L331 constitute a propeptide, removed in mature form.

The protein belongs to the small GTPase superfamily. Rho family. As to quaternary structure, interacts with RGD2.

It localises to the membrane. The protein resides in the mitochondrion. Functionally, small GTPase that negatively regulates a MAP kinase branch, downstream of SLT2, of the PKC1-mediated signal transduction pathway. With its specific guanine nucleotide exchange factor (GEF), the heterodimeric complex DCK1/LMO1, relocates to mitochondria upon oxidative stress and triggers cell death. The DCK1/LMO1/RHO5 signaling module that mediates mitochondrial turnover under nitrogen starvation conditions via mitophagy. The DCK1/LMO1/RHO5 signaling module also plays a role in cell wall integrity signaling. This Saccharomyces cerevisiae (strain ATCC 204508 / S288c) (Baker's yeast) protein is GTP-binding protein RHO5.